The following is a 71-amino-acid chain: Allergen Art v 2 (71 aa).

In terms of processing, glycosylated. High-mannose oligosaccharides (Man(5-9)GlcNAc(2)).

The polypeptide is Allergen Art v 2 (Artemisia vulgaris (Mugwort)).